The chain runs to 43 residues: Cytochrome b559 subunit beta (43 aa).

A helical membrane pass occupies residues 18 to 34 (WLAIHGLAIPTVFFLGG). His22 provides a ligand contact to heme.

The protein belongs to the PsbE/PsbF family. Heterodimer of an alpha subunit and a beta subunit. PSII is composed of 1 copy each of membrane proteins PsbA, PsbB, PsbC, PsbD, PsbE, PsbF, PsbH, PsbI, PsbJ, PsbK, PsbL, PsbM, PsbT, PsbX, PsbY, PsbZ, Psb30/Ycf12, at least 3 peripheral proteins of the oxygen-evolving complex and a large number of cofactors. It forms dimeric complexes. Heme b is required as a cofactor.

It localises to the plastid. The protein resides in the chloroplast thylakoid membrane. Functionally, this b-type cytochrome is tightly associated with the reaction center of photosystem II (PSII). PSII is a light-driven water:plastoquinone oxidoreductase that uses light energy to abstract electrons from H(2)O, generating O(2) and a proton gradient subsequently used for ATP formation. It consists of a core antenna complex that captures photons, and an electron transfer chain that converts photonic excitation into a charge separation. This is Cytochrome b559 subunit beta from Phaeodactylum tricornutum (strain CCAP 1055/1).